The primary structure comprises 397 residues: DNA-directed RNA polymerase subunit Rpo1C (397 aa).

It belongs to the RNA polymerase beta' chain family. Part of the RNA polymerase complex.

Its subcellular location is the cytoplasm. The enzyme catalyses RNA(n) + a ribonucleoside 5'-triphosphate = RNA(n+1) + diphosphate. Its function is as follows. DNA-dependent RNA polymerase (RNAP) catalyzes the transcription of DNA into RNA using the four ribonucleoside triphosphates as substrates. Forms part of the jaw domain. In Pyrococcus abyssi (strain GE5 / Orsay), this protein is DNA-directed RNA polymerase subunit Rpo1C.